The sequence spans 340 residues: Phosphate acyltransferase (340 aa).

Belongs to the PlsX family. Homodimer. Probably interacts with PlsY.

It is found in the cytoplasm. The enzyme catalyses a fatty acyl-[ACP] + phosphate = an acyl phosphate + holo-[ACP]. It participates in lipid metabolism; phospholipid metabolism. Functionally, catalyzes the reversible formation of acyl-phosphate (acyl-PO(4)) from acyl-[acyl-carrier-protein] (acyl-ACP). This enzyme utilizes acyl-ACP as fatty acyl donor, but not acyl-CoA. This Pseudomonas syringae pv. tomato (strain ATCC BAA-871 / DC3000) protein is Phosphate acyltransferase.